Reading from the N-terminus, the 245-residue chain is 5-oxoprolinase subunit A (245 aa).

Belongs to the LamB/PxpA family. As to quaternary structure, forms a complex composed of PxpA, PxpB and PxpC.

The enzyme catalyses 5-oxo-L-proline + ATP + 2 H2O = L-glutamate + ADP + phosphate + H(+). Functionally, catalyzes the cleavage of 5-oxoproline to form L-glutamate coupled to the hydrolysis of ATP to ADP and inorganic phosphate. In Erwinia tasmaniensis (strain DSM 17950 / CFBP 7177 / CIP 109463 / NCPPB 4357 / Et1/99), this protein is 5-oxoprolinase subunit A.